A 2936-amino-acid polypeptide reads, in one-letter code: Neurobeachin (2936 aa).

Residues 961–985 (ENIKKGKKGNVSTISGLSSQTAGAK) form a disordered region. The segment covering 970–982 (NVSTISGLSSQTA) has biased composition (polar residues). 2 positions are modified to phosphoserine: S1001 and S1004. Composition is skewed to polar residues over residues 1203-1220 (TSDG…SSTK) and 1231-1241 (TLETESSNSKA). Disordered stretches follow at residues 1203–1222 (TSDG…TKGL), 1231–1265 (TLET…ESGK), and 1270–1289 (IQTT…QQDR). The span at 1253–1265 (DTERSDDGKESGK) shows a compositional bias: basic and acidic residues. The segment covering 1270-1286 (IQTTATTQAVQGRSSTQ) has biased composition (polar residues). The stretch at 1316–1358 (TTMFRIPEFKWSPMHQRLLTDLLFALETDVHVWRSHSTKSVMD) is one WD 1 repeat. 4 disordered regions span residues 1480 to 1521 (QRDR…LSPI), 1639 to 1667 (PDTV…DSGM), 1701 to 1721 (VKKS…PAPS), and 1830 to 1850 (TGAV…VNGA). At S1519 the chain carries Phosphoserine. Residues 1701–1714 (VKKSQESLTEHPSE) are compositionally biased toward basic and acidic residues. 2 positions are modified to phosphoserine: S1704 and S1707. The span at 1835 to 1845 (SGSSSSSSSSS) shows a compositional bias: low complexity. A Phosphoserine modification is found at S2128. A BEACH-type PH domain is found at 2137–2245 (NLAGPVVLST…TVKKVVYSLP (109 aa)). In terms of domain architecture, BEACH spans 2264–2553 (ATPRQLYKSS…QLLIEPHPPR (290 aa)). S2565 is subject to Phosphoserine. WD repeat units follow at residues 2708 to 2751 (GHWD…HIIG), 2768 to 2808 (GHDH…RALE), 2850 to 2889 (EIND…QLYI), and 2892 to 2931 (GCDA…WHYE).

It belongs to the WD repeat neurobeachin family. In terms of assembly, interacts with RII subunit of PKA. As to expression, forebrain, brainstem and cerebellum.

The protein resides in the membrane. The protein localises to the endomembrane system. Its subcellular location is the postsynaptic cell membrane. Its function is as follows. Binds to type II regulatory subunits of protein kinase A and anchors/targets them to the membrane. May anchor the kinase to cytoskeletal and/or organelle-associated proteins. May have a role in membrane trafficking. The chain is Neurobeachin (Nbea) from Mus musculus (Mouse).